The primary structure comprises 541 residues: Chaperonin GroEL 2 (541 aa).

ATP-binding positions include 30–33 (TLGP), K51, 87–91 (DGTTT), G414, and D495.

Belongs to the chaperonin (HSP60) family. In terms of assembly, forms a cylinder of 14 subunits composed of two heptameric rings stacked back-to-back. Interacts with the co-chaperonin GroES.

Its subcellular location is the cytoplasm. The catalysed reaction is ATP + H2O + a folded polypeptide = ADP + phosphate + an unfolded polypeptide.. In terms of biological role, together with its co-chaperonin GroES, plays an essential role in assisting protein folding. The GroEL-GroES system forms a nano-cage that allows encapsulation of the non-native substrate proteins and provides a physical environment optimized to promote and accelerate protein folding. In Cereibacter sphaeroides (Rhodobacter sphaeroides), this protein is Chaperonin GroEL 2.